The sequence spans 126 residues: Histone H2B type 1-K (126 aa).

The span at 1 to 12 (MPEPAKSAPAPK) shows a compositional bias: low complexity. Positions 1 to 36 (MPEPAKSAPAPKKGSKKAVTKAQKKDGKKRKRSRKE) are disordered. Position 2 is an N-acetylproline (Pro-2). Residue Glu-3 is modified to ADP-ribosyl glutamic acid. Residue Lys-6 is modified to N6-(2-hydroxyisobutyryl)lysine; alternate. Lys-6 is modified (N6-(beta-hydroxybutyryl)lysine; alternate). An N6-acetyllysine; alternate modification is found at Lys-6. Lys-6 bears the N6-butyryllysine; alternate mark. Position 6 is an N6-crotonyllysine; alternate (Lys-6). Residue Lys-6 is modified to N6-lactoyllysine; alternate. Lys-6 participates in a covalent cross-link: Glycyl lysine isopeptide (Lys-Gly) (interchain with G-Cter in SUMO2); alternate. Position 7 is an ADP-ribosylserine (Ser-7). At Lys-12 the chain carries N6-(beta-hydroxybutyryl)lysine; alternate. Lys-12 and Lys-13 each carry N6-acetyllysine; alternate. N6-crotonyllysine; alternate is present on residues Lys-12 and Lys-13. Lys-12 carries the N6-lactoyllysine; alternate modification. Position 13 is an N6-(2-hydroxyisobutyryl)lysine; alternate (Lys-13). Ser-15 carries the post-translational modification Phosphoserine; by STK4/MST1. Lys-16, Lys-17, Lys-21, and Lys-24 each carry N6-acetyllysine; alternate. 4 positions are modified to N6-crotonyllysine; alternate: Lys-16, Lys-17, Lys-21, and Lys-24. N6-lactoyllysine; alternate is present on residues Lys-16, Lys-17, Lys-21, and Lys-24. Lys-17 is modified (N6-glutaryllysine; alternate). N6-(2-hydroxyisobutyryl)lysine; alternate occurs at positions 21 and 24. Lys-21 carries the N6-(beta-hydroxybutyryl)lysine; alternate modification. Lys-21 bears the N6-butyryllysine; alternate mark. Lys-21 is covalently cross-linked (Glycyl lysine isopeptide (Lys-Gly) (interchain with G-Cter in SUMO2); alternate). Position 25 is an N6-(2-hydroxyisobutyryl)lysine (Lys-25). The residue at position 35 (Lys-35) is an N6-(2-hydroxyisobutyryl)lysine; alternate. Lys-35 bears the N6-(beta-hydroxybutyryl)lysine; alternate mark. At Lys-35 the chain carries N6-crotonyllysine; alternate. Lys-35 is subject to N6-glutaryllysine; alternate. Lys-35 carries the post-translational modification N6-succinyllysine; alternate. Residue Lys-35 forms a Glycyl lysine isopeptide (Lys-Gly) (interchain with G-Cter in ubiquitin); alternate linkage. A PolyADP-ribosyl glutamic acid modification is found at Glu-36. Ser-37 carries the post-translational modification Phosphoserine; by AMPK. Residues Lys-44, Lys-47, and Lys-58 each carry the N6-(2-hydroxyisobutyryl)lysine; alternate modification. N6-lactoyllysine; alternate is present on Lys-44. An N6-glutaryllysine; alternate mark is found at Lys-44 and Lys-47. Lys-47 bears the N6-methyllysine; alternate mark. Lys-58 carries the post-translational modification N6,N6-dimethyllysine; alternate. At Arg-80 the chain carries Dimethylated arginine. Lys-86 carries the post-translational modification N6-(2-hydroxyisobutyryl)lysine; alternate. At Lys-86 the chain carries N6-acetyllysine; alternate. Lys-86 carries the post-translational modification N6-lactoyllysine; alternate. Lys-86 bears the N6,N6,N6-trimethyllysine; alternate mark. Residues Arg-87 and Arg-93 each carry the omega-N-methylarginine modification. Lys-109 carries the post-translational modification N6-(2-hydroxyisobutyryl)lysine; alternate. Lys-109 carries the post-translational modification N6-(beta-hydroxybutyryl)lysine; alternate. Lys-109 carries the N6-lactoyllysine; alternate modification. At Lys-109 the chain carries N6-glutaryllysine; alternate. N6-methyllysine; alternate is present on Lys-109. Ser-113 carries an O-linked (GlcNAc) serine glycan. Position 116 is a phosphothreonine (Thr-116). Residues Lys-117 and Lys-121 each carry the N6-(2-hydroxyisobutyryl)lysine; alternate modification. Lys-117 is subject to N6-(beta-hydroxybutyryl)lysine; alternate. An N6-lactoyllysine; alternate mark is found at Lys-117 and Lys-121. Residues Lys-117 and Lys-121 each carry the N6-glutaryllysine; alternate modification. Residues Lys-117 and Lys-121 each carry the N6-succinyllysine; alternate modification. At Lys-117 the chain carries N6-methylated lysine; alternate. Residue Lys-121 forms a Glycyl lysine isopeptide (Lys-Gly) (interchain with G-Cter in ubiquitin); alternate linkage.

It belongs to the histone H2B family. In terms of assembly, the nucleosome is a histone octamer containing two molecules each of H2A, H2B, H3 and H4 assembled in one H3-H4 heterotetramer and two H2A-H2B heterodimers. The octamer wraps approximately 147 bp of DNA. In terms of processing, monoubiquitination at Lys-35 (H2BK34Ub) by the MSL1/MSL2 dimer is required for histone H3 'Lys-4' (H3K4me) and 'Lys-79' (H3K79me) methylation and transcription activation at specific gene loci, such as HOXA9 and MEIS1 loci. Similarly, monoubiquitination at Lys-121 (H2BK120Ub) by the RNF20/40 complex gives a specific tag for epigenetic transcriptional activation and is also prerequisite for histone H3 'Lys-4' and 'Lys-79' methylation. It also functions cooperatively with the FACT dimer to stimulate elongation by RNA polymerase II. H2BK120Ub also acts as a regulator of mRNA splicing: deubiquitination by USP49 is required for efficient cotranscriptional splicing of a large set of exons. Post-translationally, phosphorylated on Ser-15 (H2BS14ph) by STK4/MST1 during apoptosis; which facilitates apoptotic chromatin condensation. Also phosphorylated on Ser-15 in response to DNA double strand breaks (DSBs), and in correlation with somatic hypermutation and immunoglobulin class-switch recombination. Phosphorylation at Ser-37 (H2BS36ph) by AMPK in response to stress promotes transcription. GlcNAcylation at Ser-113 promotes monoubiquitination of Lys-121. It fluctuates in response to extracellular glucose, and associates with transcribed genes. In terms of processing, ADP-ribosylated by PARP1 or PARP2 on Ser-7 (H2BS6ADPr) in response to DNA damage. H2BS6ADPr promotes recruitment of CHD1L. Mono-ADP-ribosylated on Glu-3 (H2BE2ADPr) by PARP3 in response to single-strand breaks. Poly ADP-ribosylation on Glu-36 (H2BE35ADPr) by PARP1 regulates adipogenesis: it inhibits phosphorylation at Ser-37 (H2BS36ph), thereby blocking expression of pro-adipogenetic genes. Post-translationally, crotonylation (Kcr) is specifically present in male germ cells and marks testis-specific genes in post-meiotic cells, including X-linked genes that escape sex chromosome inactivation in haploid cells. Crotonylation marks active promoters and enhancers and confers resistance to transcriptional repressors. It is also associated with post-meiotically activated genes on autosomes. Hydroxybutyrylation of histones is induced by starvation. In terms of processing, lactylated in macrophages by EP300/P300 by using lactoyl-CoA directly derived from endogenous or exogenous lactate, leading to stimulates gene transcription.

It is found in the nucleus. Its subcellular location is the chromosome. Functionally, core component of nucleosome. Nucleosomes wrap and compact DNA into chromatin, limiting DNA accessibility to the cellular machineries which require DNA as a template. Histones thereby play a central role in transcription regulation, DNA repair, DNA replication and chromosomal stability. DNA accessibility is regulated via a complex set of post-translational modifications of histones, also called histone code, and nucleosome remodeling. This Mus musculus (Mouse) protein is Histone H2B type 1-K.